The sequence spans 117 residues: Putative membrane protein insertion efficiency factor (117 aa).

Belongs to the UPF0161 family.

It localises to the cell inner membrane. Its function is as follows. Could be involved in insertion of integral membrane proteins into the membrane. In Bartonella bacilliformis (strain ATCC 35685 / KC583 / Herrer 020/F12,63), this protein is Putative membrane protein insertion efficiency factor.